The sequence spans 235 residues: MNDKVFTKAIKKQFEFDEEVAAVFDDMLQRSVPFYKESQKISEFFAQKALQNGGIAYDLGCSTATLLINISRKLQNKATLIGLDNSEAMLQRARKKCEAFKADIELENADILEYDYREANLFISNYTLQFVRPLIREELVKKIASSLKKDGLFIFSEKVISHHSKLHKDLIECYYDFKKEQGYSEYEIVQKREALENVLIPYSEEENIKMAKNCGFSHCEVVFRWANFATFIAIK.

Residues Tyr-35, 60 to 62 (GCS), 84 to 85 (DN), 110 to 111 (DI), Asn-125, and Arg-192 contribute to the S-adenosyl-L-methionine site.

This sequence belongs to the class I-like SAM-binding methyltransferase superfamily. Cx-SAM synthase family. Homodimer.

It carries out the reaction prephenate + S-adenosyl-L-methionine = carboxy-S-adenosyl-L-methionine + 3-phenylpyruvate + H2O. Functionally, catalyzes the conversion of S-adenosyl-L-methionine (SAM) to carboxy-S-adenosyl-L-methionine (Cx-SAM). The sequence is that of Carboxy-S-adenosyl-L-methionine synthase from Sulfurimonas denitrificans (strain ATCC 33889 / DSM 1251) (Thiomicrospira denitrificans (strain ATCC 33889 / DSM 1251)).